The chain runs to 589 residues: Mediator of RNA polymerase II transcription subunit 26 (589 aa).

The 78-residue stretch at 10 to 87 (QMRDRLLQAI…RNWQKLIEPG (78 aa)) folds into the TFIIS N-terminal domain. 3 disordered regions span residues 83–233 (LIEP…TKLP), 247–320 (ARVD…DGPS), and 363–441 (LETK…PIPE). Over residues 190-213 (LLEKDDEVPSDRIRLEHLDNDRHN) the composition is skewed to basic and acidic residues. Residues 259-268 (SPRYSSSPRS) are compositionally biased toward low complexity. The span at 276–297 (KRSTTYAPKGTLSSPSLNSAQV) shows a compositional bias: polar residues. Basic and acidic residues-rich tracts occupy residues 398–412 (SEDR…RRLT) and 424–435 (TPKESHQEEECH).

The protein belongs to the Mediator complex subunit 26 family. Component of the Mediator complex.

Its subcellular location is the nucleus. In terms of biological role, component of the Mediator complex, a coactivator involved in the regulated transcription of nearly all RNA polymerase II-dependent genes. Mediator functions as a bridge to convey information from gene-specific regulatory proteins to the basal RNA polymerase II transcription machinery. Mediator is recruited to promoters by direct interactions with regulatory proteins and serves as a scaffold for the assembly of a functional preinitiation complex with RNA polymerase II and the general transcription factors. The sequence is that of Mediator of RNA polymerase II transcription subunit 26 (med26) from Danio rerio (Zebrafish).